The sequence spans 339 residues: Glycerol-3-phosphate dehydrogenase [NAD(P)+] (339 aa).

Positions 14, 15, 35, and 109 each coordinate NADPH. Sn-glycerol 3-phosphate is bound by residues K109, G138, and T140. A142 is a binding site for NADPH. Residues K194, D247, S257, R258, and N259 each coordinate sn-glycerol 3-phosphate. The active-site Proton acceptor is K194. R258 serves as a coordination point for NADPH. Residues V282 and E284 each coordinate NADPH.

It belongs to the NAD-dependent glycerol-3-phosphate dehydrogenase family.

The protein resides in the cytoplasm. It carries out the reaction sn-glycerol 3-phosphate + NAD(+) = dihydroxyacetone phosphate + NADH + H(+). It catalyses the reaction sn-glycerol 3-phosphate + NADP(+) = dihydroxyacetone phosphate + NADPH + H(+). It functions in the pathway membrane lipid metabolism; glycerophospholipid metabolism. In terms of biological role, catalyzes the reduction of the glycolytic intermediate dihydroxyacetone phosphate (DHAP) to sn-glycerol 3-phosphate (G3P), the key precursor for phospholipid synthesis. This Shewanella halifaxensis (strain HAW-EB4) protein is Glycerol-3-phosphate dehydrogenase [NAD(P)+].